The sequence spans 308 residues: MDYYYCPSLLKLLRYLWNQLKQCFSRRAPEAKDTDTLVQEADSQYGTWADQHQNGGSFGPESPSPDSSAASVGKQPPGSHLSSYTESTSVEQRDSSRDRRSSSVDRSSSELESTDGPEGPPPSDVCPAQEDDFSFIHQTSVLDSSALKTRVQLSKRSRRRAPISHSLRRSQFSESESRSPLEEESHSTWMFKDSTEEKSPRRDESDEEPPRVERTPVSHPQRMPVFPGMDPAVLKAQLPKRSEVDSPGDSLSWTPQPKSPKSPFHPGVLGSRVLPPSTEKEERSEECSPQWLKELKSKKRQSLYENQA.

Over residues 43 to 55 (SQYGTWADQHQNG) the composition is skewed to polar residues. Residues 43 to 289 (SQYGTWADQH…KEERSEECSP (247 aa)) are disordered. Residue Ser-62 is modified to Phosphoserine. Residues 80-90 (HLSSYTESTSV) are compositionally biased toward polar residues. The segment covering 91-109 (EQRDSSRDRRSSSVDRSSS) has biased composition (basic and acidic residues). Residues 136–152 (IHQTSVLDSSALKTRVQ) are compositionally biased toward polar residues. Basic residues predominate over residues 153-168 (LSKRSRRRAPISHSLR). A Phosphoserine modification is found at Ser-166. Basic and acidic residues-rich tracts occupy residues 175-186 (SESRSPLEEESH) and 193-216 (DSTE…ERTP). Phosphoserine occurs at positions 205, 259, 262, and 288.

This is an uncharacterized protein from Mus musculus (Mouse).